The following is a 263-amino-acid chain: Troponin T, fast skeletal muscle isoforms (263 aa).

Residues 1-26 are compositionally biased toward acidic residues; the sequence is MSDTEEVEHGEEEYEEEAHEAEEVHE. 3 disordered regions span residues 1–66, 107–188, and 243–263; these read MSDT…FDDI, RAER…VLAE, and DQAQ…GRWK. Position 2 is an N-acetylserine (Ser-2). 3 stretches are compositionally biased toward basic and acidic residues: residues 56-66, 107-149, and 177-188; these read PEGEKVDFDDI, RAER…DDLK, and TARETKKKVLAE. Basic residues predominate over residues 247 to 263; it reads KHSKKAGAKGKVGGRWK.

The protein belongs to the troponin T family.

Functionally, troponin T is the tropomyosin-binding subunit of troponin, the thin filament regulatory complex which confers calcium-sensitivity to striated muscle actomyosin ATPase activity. This chain is Troponin T, fast skeletal muscle isoforms (TNNT3), found in Gallus gallus (Chicken).